The following is a 355-amino-acid chain: tRNA uridine(34) hydroxylase (355 aa).

The Rhodanese domain maps to aspartate 146–leucine 240. The active-site Cysteine persulfide intermediate is cysteine 200.

This sequence belongs to the TrhO family.

The enzyme catalyses uridine(34) in tRNA + AH2 + O2 = 5-hydroxyuridine(34) in tRNA + A + H2O. Functionally, catalyzes oxygen-dependent 5-hydroxyuridine (ho5U) modification at position 34 in tRNAs. This chain is tRNA uridine(34) hydroxylase, found in Pectobacterium atrosepticum (strain SCRI 1043 / ATCC BAA-672) (Erwinia carotovora subsp. atroseptica).